We begin with the raw amino-acid sequence, 669 residues long: DNA ligase (669 aa).

NAD(+) contacts are provided by residues 32-36, 81-82, and glutamate 113; these read DAEYD and SL. Catalysis depends on lysine 115, which acts as the N6-AMP-lysine intermediate. NAD(+) is bound by residues arginine 136, glutamate 173, lysine 290, and lysine 314. Cysteine 408, cysteine 411, cysteine 426, and cysteine 432 together coordinate Zn(2+). One can recognise a BRCT domain in the interval 592–669; that stretch reads AVDSALAGKI…DEQALIEFLK (78 aa).

This sequence belongs to the NAD-dependent DNA ligase family. LigA subfamily. Mg(2+) serves as cofactor. The cofactor is Mn(2+).

It catalyses the reaction NAD(+) + (deoxyribonucleotide)n-3'-hydroxyl + 5'-phospho-(deoxyribonucleotide)m = (deoxyribonucleotide)n+m + AMP + beta-nicotinamide D-nucleotide.. Its function is as follows. DNA ligase that catalyzes the formation of phosphodiester linkages between 5'-phosphoryl and 3'-hydroxyl groups in double-stranded DNA using NAD as a coenzyme and as the energy source for the reaction. It is essential for DNA replication and repair of damaged DNA. The chain is DNA ligase from Vibrio cholerae serotype O1 (strain ATCC 39315 / El Tor Inaba N16961).